A 402-amino-acid chain; its full sequence is Pyridinium-3,5-bisthiocarboxylic acid mononucleotide nickel insertion protein (402 aa).

Belongs to the LarC family.

The catalysed reaction is Ni(II)-pyridinium-3,5-bisthiocarboxylate mononucleotide = pyridinium-3,5-bisthiocarboxylate mononucleotide + Ni(2+). Involved in the biosynthesis of a nickel-pincer cofactor ((SCS)Ni(II) pincer complex). Binds Ni(2+), and functions in nickel delivery to pyridinium-3,5-bisthiocarboxylic acid mononucleotide (P2TMN), to form the mature cofactor. Is thus probably required for the activation of nickel-pincer cofactor-dependent enzymes. The sequence is that of Pyridinium-3,5-bisthiocarboxylic acid mononucleotide nickel insertion protein from Thermotoga sp. (strain RQ2).